A 1103-amino-acid chain; its full sequence is Kinesin-like protein KIF1C (1103 aa).

Residues 5-348 (SVKVAVRVRP…LRYADRTKQI (344 aa)) form the Kinesin motor domain. Residue 97 to 104 (GQTGAGKS) participates in ATP binding. Ser-295 carries the phosphoserine modification. 2 coiled-coil regions span residues 359–388 (NARL…SALE) and 438–479 (EEAM…LAEM). Residues 400 to 438 (ALPAVSSPPAPVSPSSPTTHNGELEPSFSPNTESQIGPE) are disordered. Ser-494 is modified (phosphoserine). Positions 523–590 (TRVGQVDMDI…LKSGNRIVMG (68 aa)) constitute an FHA domain. Residues 633–674 (EQQGIDIKLEMEKRLQDLENQYRKEKEEADLLLEQQRLYADS) are a coiled coil. Residues Ser-674 and Ser-676 each carry the phosphoserine modification. Disordered stretches follow at residues 808–828 (GEEE…ARGA), 874–924 (LAQD…WERV), and 950–1103 (QGLQ…GAAV). The span at 813 to 822 (GGAGSGGGSE) shows a compositional bias: gly residues. The stretch at 828–872 (AEVEDLRAHIDKLTGILQEVKLQNSSKDRELQALRDRMLRMERVI) forms a coiled coil. The segment covering 893 to 910 (PEGSEAAEEAAPSDRMPS) has biased composition (low complexity). Residue Ser-915 is modified to Phosphoserine. Gly residues predominate over residues 953-962 (QGSGGRGGGL). Residues 1021-1031 (PSPRRSHHPRR) are compositionally biased toward basic residues. Ser-1033 carries the post-translational modification Phosphoserine. Arg-1041 is subject to Omega-N-methylarginine. Positions 1062-1083 (PQPPQPYPAQRPPGPRYPPYTT) are enriched in pro residues. Thr-1083 carries the phosphothreonine modification. Ser-1092 bears the Phosphoserine mark. Residues 1092 to 1103 (SAPDLKESGAAV) show a composition bias toward basic and acidic residues.

This sequence belongs to the TRAFAC class myosin-kinesin ATPase superfamily. Kinesin family. Unc-104 subfamily. Monomer. Interacts with BICD2. Phosphorylated on tyrosine residues. As to expression, expressed in all tissues examined, with most abundant expression in heart and skeletal muscle.

The protein resides in the cytoplasm. It is found in the cytoskeleton. Motor required for the retrograde transport of Golgi vesicles to the endoplasmic reticulum. Has a microtubule plus end-directed motility. The protein is Kinesin-like protein KIF1C (KIF1C) of Homo sapiens (Human).